The sequence spans 255 residues: MINFPQHPRQTLELAGFLPEASGRAVEWLISDSQVPYSEAVAAMDSRAAAIAAGDANELVWLLEHPPLYTSGTSGQAADLLDPRFPLHATGRGGQLTYHGPGQRVAYVMLDLKRRRPDVRAYVAALEQWIIATLEAFNVRGERREDRVGVWVARPDKGVGHEDKIAAIGVRLKRWVSLHGIAINVEPDLGHFAAIVPCGISDPRYGVTSLVDLGLPVTMTDVDLALRASFTTIFGATVNASGSEPAAGSVNSSSV.

In terms of domain architecture, BPL/LPL catalytic spans 54–238 (GDANELVWLL…SFTTIFGATV (185 aa)). Substrate-binding positions include 92–99 (RGGQLTYH), 167–169 (AIG), and 180–182 (GIA). C198 acts as the Acyl-thioester intermediate in catalysis.

This sequence belongs to the LipB family.

It is found in the cytoplasm. It catalyses the reaction octanoyl-[ACP] + L-lysyl-[protein] = N(6)-octanoyl-L-lysyl-[protein] + holo-[ACP] + H(+). The protein operates within protein modification; protein lipoylation via endogenous pathway; protein N(6)-(lipoyl)lysine from octanoyl-[acyl-carrier-protein]: step 1/2. Its function is as follows. Catalyzes the transfer of endogenously produced octanoic acid from octanoyl-acyl-carrier-protein onto the lipoyl domains of lipoate-dependent enzymes. Lipoyl-ACP can also act as a substrate although octanoyl-ACP is likely to be the physiological substrate. This Rhodopseudomonas palustris (strain BisB5) protein is Octanoyltransferase.